A 232-amino-acid chain; its full sequence is MAERHPERSTEAFFGRRRGKRLRSQQTAAVEKLLPRLKLDLSSPAPAALDSLFGKPLREIRLEIGFGGGEHLLNEIRRHPDVGFIGVEPFVNGMAKLVAALEGEAPPNLRLYDDDATKLLDWLPDSAISRIDLFYPDPWPKKRHWKRRFVNKANLDRFARVLCVDGQFRFASDIEGYVNWTLLACRAHPDFRWVAKSAEDWRHPYEGWPGTRYEAKAMREGRHPAYLTFVRV.

Residues glutamate 63, glutamate 88, aspartate 115, and aspartate 137 each coordinate S-adenosyl-L-methionine. Aspartate 137 is an active-site residue. Residues lysine 141, aspartate 173, and 211-214 contribute to the substrate site; that span reads TRYE.

The protein belongs to the class I-like SAM-binding methyltransferase superfamily. TrmB family.

It carries out the reaction guanosine(46) in tRNA + S-adenosyl-L-methionine = N(7)-methylguanosine(46) in tRNA + S-adenosyl-L-homocysteine. It functions in the pathway tRNA modification; N(7)-methylguanine-tRNA biosynthesis. Functionally, catalyzes the formation of N(7)-methylguanine at position 46 (m7G46) in tRNA. This chain is tRNA (guanine-N(7)-)-methyltransferase, found in Chelativorans sp. (strain BNC1).